The primary structure comprises 218 residues: Lipoprotein-releasing system ATP-binding protein LolD (218 aa).

The ABC transporter domain maps to isoleucine 2–aspartate 218. Glycine 34–threonine 41 serves as a coordination point for ATP.

The protein belongs to the ABC transporter superfamily. Lipoprotein translocase (TC 3.A.1.125) family. The complex is composed of two ATP-binding proteins (LolD) and two transmembrane proteins (LolC and LolE).

It is found in the cell inner membrane. Functionally, part of the ABC transporter complex LolCDE involved in the translocation of mature outer membrane-directed lipoproteins, from the inner membrane to the periplasmic chaperone, LolA. Responsible for the formation of the LolA-lipoprotein complex in an ATP-dependent manner. The chain is Lipoprotein-releasing system ATP-binding protein LolD from Bacteroides thetaiotaomicron (strain ATCC 29148 / DSM 2079 / JCM 5827 / CCUG 10774 / NCTC 10582 / VPI-5482 / E50).